Here is a 423-residue protein sequence, read N- to C-terminus: Salicylate 5-hydroxylase, large oxygenase component (423 aa).

Residues methionine 1 to glutamate 20 are disordered. The 120-residue stretch at tryptophan 49–alanine 168 folds into the Rieske domain. 4 residues coordinate [2Fe-2S] cluster: cysteine 91, histidine 93, cysteine 111, and histidine 114. Fe cation is bound by residues histidine 224, histidine 229, and aspartate 370.

The protein belongs to the bacterial ring-hydroxylating dioxygenase alpha subunit family. The salicylate 5-hydroxylase (S5H) multicomponent enzyme system is composed of an electron transfer component and an oxygenase component. The electron transfer component is comprised of a ferredoxin reductase (NagAa) and a ferredoxin (NagAb), and the oxygenase component is formed by a large subunit (NagG) and a small subunit (NagH). Requires Fe cation as cofactor. [2Fe-2S] cluster is required as a cofactor.

It carries out the reaction salicylate + NADH + O2 + H(+) = 2,5-dihydroxybenzoate + NAD(+) + H2O. It participates in aromatic compound metabolism; naphthalene degradation. Its function is as follows. Oxygenase component of the salicylate 5-hydroxylase (S5H) multicomponent enzyme system which catalyzes the 5-hydroxylation of salicylate to gentisate. Active only on substrates with a ring-substituted carboxylate group with an adjacent hydroxyl group. Primarily active against salicylate and substituted salicylates, but not against 2-hydroxycinnamate, 3-hydroxycinnamate, 2-hydroxyphenylacetate, 3-hydroxyphenylacetate, 2-hydroxybenzophenone, 1-hydroxy-2-naphthoate, 4-methoxysalicylate or 2-hydroxyacetophenone. This chain is Salicylate 5-hydroxylase, large oxygenase component, found in Ralstonia sp.